Reading from the N-terminus, the 324-residue chain is NADH-ubiquinone oxidoreductase chain 1 (324 aa).

A run of 9 helical transmembrane segments spans residues 9-29 (ILNPLAFIVPVLLAVAFLTLL), 43-63 (PNIVGPYGLLQPIADGVKLFI), 75-95 (ILFILTPMLALTLAMTLWAPL), 106-126 (LAILLFVALSSLAVYSILGSG), 146-166 (ISYEVSLGLILLSLIIFTGGF), 177-197 (SIWLIIPAWPLAAMWYISTLA), 228-250 (LFFLAEYANILFMNTLSASLFLG), 259-279 (ELTTMNLMTKAAVLSLVFLWV), and 299-319 (FLPLTLALVIWHLALPITFAG).

It belongs to the complex I subunit 1 family.

It is found in the mitochondrion inner membrane. The catalysed reaction is a ubiquinone + NADH + 5 H(+)(in) = a ubiquinol + NAD(+) + 4 H(+)(out). Functionally, core subunit of the mitochondrial membrane respiratory chain NADH dehydrogenase (Complex I) that is believed to belong to the minimal assembly required for catalysis. Complex I functions in the transfer of electrons from NADH to the respiratory chain. The immediate electron acceptor for the enzyme is believed to be ubiquinone. This Tetraodon nigroviridis (Spotted green pufferfish) protein is NADH-ubiquinone oxidoreductase chain 1 (MT-ND1).